The chain runs to 105 residues: Urease subunit beta (105 aa).

This sequence belongs to the urease beta subunit family. Heterotrimer of UreA (gamma), UreB (beta) and UreC (alpha) subunits. Three heterotrimers associate to form the active enzyme.

It localises to the cytoplasm. The catalysed reaction is urea + 2 H2O + H(+) = hydrogencarbonate + 2 NH4(+). It functions in the pathway nitrogen metabolism; urea degradation; CO(2) and NH(3) from urea (urease route): step 1/1. The protein is Urease subunit beta of Marinomonas sp. (strain MWYL1).